Reading from the N-terminus, the 1138-residue chain is 2'-5'-oligoadenylate synthase 3 (1138 aa).

An N-acetylmethionine modification is found at Met-1. An OAS domain 1 region spans residues 6–341 (TPAGALDKLV…GVLVQPWEGP (336 aa)). Interaction with dsRNA regions lie at residues 12–56 (DKLV…VIRI) and 185–199 (EPRK…AKLK). The tract at residues 342-462 (GLPRAGILDL…GSRMSPDLSQ (121 aa)) is linker. Positions 370 to 379 (LAVQSKERSQ) are enriched in basic and acidic residues. 2 disordered regions span residues 370–403 (LAVQ…NPSA) and 434–459 (TQST…MSPD). A compositionally biased stretch (polar residues) spans 447–459 (SSISTAGSRMSPD). OAS domain stretches follow at residues 463–793 (IPSK…PWDV) and 801–1135 (TLAE…WPVK). Ser-855 provides a ligand contact to ATP. Residues Asp-867, Asp-869, and Asp-939 each coordinate Mg(2+). ATP-binding residues include Arg-998, Lys-1001, and Gln-1020.

Belongs to the 2-5A synthase family. As to quaternary structure, monomer. Requires Mg(2+) as cofactor. As to expression, intestine.

Its subcellular location is the cytoplasm. It is found in the nucleus. The enzyme catalyses 3 ATP = 5'-triphosphoadenylyl-(2'-&gt;5')-adenylyl-(2'-&gt;5')-adenosine + 2 diphosphate. Its activity is regulated as follows. Produced as a latent enzyme which is activated by dsRNA generated during the course of viral infection. Strongly activated by long dsRNAs at least 50 nucleotides in length. ssRNA does not activate the enzyme. Functionally, interferon-induced, dsRNA-activated antiviral enzyme which plays a critical role in cellular innate antiviral response. In addition, it may also play a role in other cellular processes such as apoptosis, cell growth, differentiation and gene regulation. Synthesizes preferentially dimers of 2'-5'-oligoadenylates (2-5A) from ATP which then bind to the inactive monomeric form of ribonuclease L (RNase L) leading to its dimerization and subsequent activation. Activation of RNase L leads to degradation of cellular as well as viral RNA, resulting in the inhibition of protein synthesis, thus terminating viral replication. Can mediate the antiviral effect via the classical RNase L-dependent pathway or an alternative antiviral pathway independent of RNase L. The polypeptide is 2'-5'-oligoadenylate synthase 3 (Oas3) (Mus musculus (Mouse)).